The chain runs to 2628 residues: Hemagglutinin A (2628 aa).

The signal sequence occupies residues 1–24; it reads MRKLNSLFSLAVLLSLLCWGQTAA. 5 peptidase C25-like regions span residues 25–539, 540–995, 996–1451, 1452–1907, and 2074–2628; these read AQGG…TPPP, GGTS…TPPP, and IDAD…LAVK. Disordered stretches follow at residues 493–512, 520–546, 944–1002, 1400–1458, 1856–1881, 1890–1909, and 2336–2358; these read WDAP…LSES, SWKT…SFAG, KWDA…SFAG, KWDA…SESF, KTID…PPGG, and SSWK…PPGG. The segment covering 496 to 508 has biased composition (low complexity); the sequence is PNGTPNPNPGTTT.

It belongs to the peptidase C25 family.

Agglutinates erythrocytes. In Porphyromonas gingivalis (Bacteroides gingivalis), this protein is Hemagglutinin A (hagA).